Reading from the N-terminus, the 103-residue chain is Small ribosomal subunit protein uS10 (103 aa).

The protein belongs to the universal ribosomal protein uS10 family. In terms of assembly, part of the 30S ribosomal subunit.

In terms of biological role, involved in the binding of tRNA to the ribosomes. The protein is Small ribosomal subunit protein uS10 of Alkalilimnicola ehrlichii (strain ATCC BAA-1101 / DSM 17681 / MLHE-1).